The chain runs to 140 residues: Lymphocyte antigen 6 complex locus protein G5c (140 aa).

The N-terminal stretch at 1–41 (MRFMAGPAGSQNPGPMCFHSSLQALYTVLLIVLVMMSLVFG) is a signal peptide. The UPAR/Ly6 domain maps to 60 to 140 (LRCYRCLLET…SQCCFLGFLQ (81 aa)). Intrachain disulfides connect Cys-62–Cys-89, Cys-65–Cys-74, Cys-81–Cys-107, and Cys-116–Cys-133. Asn-96 carries an N-linked (GlcNAc...) asparagine glycan.

As to quaternary structure, forms oligomers. Post-translationally, N-glycosylated.

The protein resides in the secreted. In terms of biological role, may have a role in hematopoietic cell differentiation. The polypeptide is Lymphocyte antigen 6 complex locus protein G5c (LY6G5C) (Macaca mulatta (Rhesus macaque)).